A 130-amino-acid polypeptide reads, in one-letter code: Metastasis-suppressor KiSS-1 (130 aa).

Residues 1-19 (MISMASWQLLLLLCVATYG) form the signal peptide. A disordered region spans residues 49-82 (KESRYAESKPGSAGLRARRSSPCPPVEGPAGRQR). Cysteine 71 and cysteine 85 are oxidised to a cystine. Residue tyrosine 110 is modified to Phosphotyrosine. The tract at residues 110–119 (YNWNSFGLRY) is essential for receptor binding and receptor activation. A Tyrosine amide modification is found at tyrosine 119.

This sequence belongs to the KISS1 family. In terms of tissue distribution, weak in all tissue types with highest levels in lung and 15- 17-day embryos. Expressed in areas of the hypothalamus implicated in the neuroendocrine regulation of gonadotropin secretion, including the anteroventral periventricular nucleus, the periventricular nucleus, and the arcuate nucleus.

Its subcellular location is the secreted. Functionally, metastasis suppressor protein. May regulate events downstream of cell-matrix adhesion, perhaps involving cytoskeletal reorganization. Generates a C-terminally amidated peptide, metastin which functions as the endogenous ligand of the G-protein coupled receptor GPR54. Activation of the receptor inhibits cell proliferation and cell migration, key characteristics of tumor metastasis. The receptor is also essential for normal gonadotropin-released hormone physiology and for puberty. The hypothalamic KiSS1/GPR54 system is a pivotal factor in central regulation of the gonadotropic axis at puberty and in adulthood. Intracerebroventricular administration induces an increase in serum LH and FSH levels in prepubertal male and female as well as in adult animals. The polypeptide is Metastasis-suppressor KiSS-1 (Kiss1) (Mus musculus (Mouse)).